Consider the following 213-residue polypeptide: UPF0301 protein RPC_0788 (213 aa).

Positions 1–20 are disordered; it reads MDPKSKAPKRDETKGADDAS.

It belongs to the UPF0301 (AlgH) family.

The chain is UPF0301 protein RPC_0788 from Rhodopseudomonas palustris (strain BisB18).